The chain runs to 289 residues: Myoblast determination protein 1 homolog A (289 aa).

Positions 95–146 constitute a bHLH domain; sequence DRRKAATMRERRRLSKVNEAFETLKRYTSTNPNQRLPKVEILRNAIRYIESL. The interval 165 to 212 is disordered; the sequence is SGDSDASSPRSNCSDGMMDYNSPPCGSRRRNSYDSSFYSDSPNDSRLG. Polar residues-rich tracts occupy residues 168-178 and 197-208; these read SDASSPRSNCS and YDSSFYSDSPND.

Efficient DNA binding requires dimerization with another bHLH protein.

It localises to the nucleus. In terms of biological role, may act as a transcriptional activator that promotes transcription of muscle-specific target genes and plays a role in muscle differentiation. In Xenopus laevis (African clawed frog), this protein is Myoblast determination protein 1 homolog A (myod1-a).